The sequence spans 204 residues: Methyl-CpG-binding domain-containing protein 1 (204 aa).

The disordered stretch occupies residues methionine 1–glycine 46. Positions glutamate 15 to serine 24 are enriched in polar residues. Positions lysine 25–alanine 34 are enriched in basic and acidic residues. The CW-type zinc-finger motif lies at glycine 49 to tyrosine 104. The MBD-associated domain (MAD) signature appears at glutamine 58–cysteine 96. Positions 59, 62, 88, and 96 each coordinate Zn(2+). Residues tryptophan 110 to valine 180 enclose the MBD domain.

Mostly expressed in flowers and buds.

The protein resides in the nucleus. In terms of biological role, probable transcriptional regulator. This is Methyl-CpG-binding domain-containing protein 1 (MBD1) from Arabidopsis thaliana (Mouse-ear cress).